The chain runs to 182 residues: Inner membrane assembly complex subunit 17 (182 aa).

The transit peptide at 1-45 (MLKRRSNALITLSRTKLFPITTVAYYHRRLLNQQRRAVSTSPKKE) directs the protein to the mitochondrion. Over 46–107 (IKSLEDLANL…EIPVKRFIRP (62 aa)) the chain is Mitochondrial matrix. The chain crosses the membrane as a helical span at residues 108-127 (LWMFILMGSSVYLLLHFSWW). Residues 128 to 158 (KLEHEERESQLKKEVEILEHQLNELIIQDKT) adopt a coiled-coil conformation. Topologically, residues 128 to 182 (KLEHEERESQLKKEVEILEHQLNELIIQDKTHNTSRGKGSNESTHMKPWYRRWFW) are mitochondrial intermembrane.

This sequence belongs to the INA17 family. As to quaternary structure, component of the inner membrane assembly (INA) complex, composed of INA17 and INA22. Interacts with a subset of F(1)F(0)-ATP synthase subunits of the F(1)-domain and the peripheral stalk.

The protein localises to the mitochondrion inner membrane. Functionally, component of the INA complex (INAC) that promotes the biogenesis of mitochondrial F(1)F(0)-ATP synthase. INAC facilitates the assembly of the peripheral stalk and promotes the assembly of the catalytic F(1)-domain with the membrane-embedded F(0)-domain. In Saccharomyces cerevisiae (strain YJM789) (Baker's yeast), this protein is Inner membrane assembly complex subunit 17.